A 670-amino-acid chain; its full sequence is DNA ligase (670 aa).

Residues 32-36 (DAEYD), 81-82 (SL), and glutamate 113 contribute to the NAD(+) site. The N6-AMP-lysine intermediate role is filled by lysine 115. 4 residues coordinate NAD(+): arginine 136, glutamate 173, lysine 290, and lysine 314. Residues cysteine 408, cysteine 411, cysteine 426, and cysteine 432 each coordinate Zn(2+). In terms of domain architecture, BRCT spans 592-670 (EIDSPFAGKT…EAEMIRLLGE (79 aa)).

Belongs to the NAD-dependent DNA ligase family. LigA subfamily. The cofactor is Mg(2+). Mn(2+) serves as cofactor.

The catalysed reaction is NAD(+) + (deoxyribonucleotide)n-3'-hydroxyl + 5'-phospho-(deoxyribonucleotide)m = (deoxyribonucleotide)n+m + AMP + beta-nicotinamide D-nucleotide.. DNA ligase that catalyzes the formation of phosphodiester linkages between 5'-phosphoryl and 3'-hydroxyl groups in double-stranded DNA using NAD as a coenzyme and as the energy source for the reaction. It is essential for DNA replication and repair of damaged DNA. This chain is DNA ligase, found in Yersinia pseudotuberculosis serotype O:1b (strain IP 31758).